The sequence spans 424 residues: Tyrosine--tRNA ligase (424 aa).

An L-tyrosine-binding site is contributed by Tyr37. Residues 42 to 51 carry the 'HIGH' region motif; it reads PTADSLHLGH. An N6-acetyllysine modification is found at Lys144. L-tyrosine is bound by residues Tyr175 and Gln179. A 'KMSKS' region motif is present at residues 235–239; sequence KFGKT. Residue Lys238 participates in ATP binding. Residues 357 to 414 enclose the S4 RNA-binding domain; it reads ADLMQALVDSELQPSRGQARKTIASNAVTINGEKQSDPEYFFKEEDRLFGRFTLLRRG.

It belongs to the class-I aminoacyl-tRNA synthetase family. TyrS type 1 subfamily. Homodimer.

The protein localises to the cytoplasm. It catalyses the reaction tRNA(Tyr) + L-tyrosine + ATP = L-tyrosyl-tRNA(Tyr) + AMP + diphosphate + H(+). Functionally, catalyzes the attachment of tyrosine to tRNA(Tyr) in a two-step reaction: tyrosine is first activated by ATP to form Tyr-AMP and then transferred to the acceptor end of tRNA(Tyr). This is Tyrosine--tRNA ligase from Escherichia fergusonii (strain ATCC 35469 / DSM 13698 / CCUG 18766 / IAM 14443 / JCM 21226 / LMG 7866 / NBRC 102419 / NCTC 12128 / CDC 0568-73).